A 60-amino-acid polypeptide reads, in one-letter code: Large ribosomal subunit protein bL32 (60 aa).

The protein belongs to the bacterial ribosomal protein bL32 family.

This chain is Large ribosomal subunit protein bL32, found in Clostridium perfringens (strain ATCC 13124 / DSM 756 / JCM 1290 / NCIMB 6125 / NCTC 8237 / Type A).